We begin with the raw amino-acid sequence, 179 residues long: Natural killer cells antigen CD94 (179 aa).

The Cytoplasmic portion of the chain corresponds to 1–10; it reads MAVFKTTLWW. A helical; Signal-anchor for type II membrane protein membrane pass occupies residues 11–31; the sequence is LISGTLGIICLSLTATLGILL. Residues 32–179 lie on the Extracellular side of the membrane; it reads KNSFTKLSIE…NRYICKQQLI (148 aa). Cystine bridges form between cysteine 58–cysteine 70 and cysteine 61–cysteine 72. The C-type lectin domain occupies 68-175; it reads YRCNCYFISS…CEDKNRYICK (108 aa). N-linked (GlcNAc...) asparagine glycosylation is found at asparagine 83 and asparagine 132. Intrachain disulfides connect cysteine 89–cysteine 174 and cysteine 152–cysteine 166.

In terms of assembly, can form disulfide-bonded heterodimer with NKG2 family members KLRC1 and KLRC2. KLRD1-KLRC1 heterodimer interacts with peptide-bound MHC-E-B2M heterotrimeric complex. KLRD1 plays a prominent role in directly interacting with MHC-E. KLRD1-KLRC1 interacts with much higher affinity with peptide-bound MHC-E-B2M than KLRD1-KLRC2. Interacts with the adapter protein TYROBP/DAP12; this interaction is required for cell surface expression and cell activation. As to expression, natural killer cells.

It is found in the cell membrane. Its function is as follows. Immune receptor involved in self-nonself discrimination. In complex with KLRC1 or KLRC2 on cytotoxic and regulatory lymphocyte subsets, recognizes non-classical major histocompatibility (MHC) class Ib molecule MHC-E loaded with self-peptides derived from the signal sequence of classical MHC class Ia and non-classical MHC class Ib molecules. Enables cytotoxic cells to monitor the expression of MHC class I molecules in healthy cells and to tolerate self. Primarily functions as a ligand binding subunit as it lacks the capacity to signal. KLRD1-KLRC1 acts as an immune inhibitory receptor. Key inhibitory receptor on natural killer (NK) cells that regulates their activation and effector functions. Dominantly counteracts T cell receptor signaling on a subset of memory/effector CD8-positive T cells as part of an antigen-driven response to avoid autoimmunity. On intraepithelial CD8-positive gamma-delta regulatory T cells triggers TGFB1 secretion, which in turn limits the cytotoxic programming of intraepithelial CD8-positive alpha-beta T cells, distinguishing harmless from pathogenic antigens. In MHC-E-rich tumor microenvironment, acts as an immune inhibitory checkpoint and may contribute to progressive loss of effector functions of NK cells and tumor-specific T cells, a state known as cell exhaustion. Upon MHC-E-peptide binding, transmits intracellular signals through KLRC1 immunoreceptor tyrosine-based inhibition motifs (ITIMs) by recruiting INPP5D/SHIP-1 and INPPL1/SHIP-2 tyrosine phosphatases to ITIMs, and ultimately opposing signals transmitted by activating receptors through dephosphorylation of proximal signaling molecules. Functionally, KLRD1-KLRC2 acts as an immune activating receptor. On cytotoxic lymphocyte subsets recognizes MHC-E loaded with signal sequence-derived peptides from non-classical MHC class Ib MHC-G molecules, likely playing a role in the generation and effector functions of adaptive NK cells and in maternal-fetal tolerance during pregnancy. Regulates the effector functions of terminally differentiated cytotoxic lymphocyte subsets, and in particular may play a role in adaptive NK cell response to viral infection. Upon MHC-E-peptide binding, transmits intracellular signals via the adapter protein TYROBP/DAP12, triggering the phosphorylation of proximal signaling molecules and cell activation. The sequence is that of Natural killer cells antigen CD94 (KLRD1) from Pongo pygmaeus (Bornean orangutan).